The sequence spans 248 residues: Protein FAM133A (248 aa).

Basic and acidic residues predominate over residues 68 to 80 (NWKKELEKSREKL). The interval 68-248 (NWKKELEKSR…KKSGSSHKSR (181 aa)) is disordered. The span at 90–102 (KRERKKKRKKKSC) shows a compositional bias: basic residues. Low complexity predominate over residues 103–118 (RSSSSSSSSDSSSSSS). Positions 127 to 138 (QGKRRKKKKNRS) are enriched in basic residues. Composition is skewed to basic and acidic residues over residues 147–156 (HESESESKES), 163–175 (SKDETEKEKDVRS), and 211–220 (RCEEREQAKE). The segment covering 221–248 (KVKKKKKKQHKKHSKKKKKKSGSSHKSR) has biased composition (basic residues).

It belongs to the FAM133 family.

In Homo sapiens (Human), this protein is Protein FAM133A (FAM133A).